A 179-amino-acid polypeptide reads, in one-letter code: Large ribosomal subunit protein eL18 (179 aa).

This sequence belongs to the eukaryotic ribosomal protein eL18 family. In terms of assembly, component of the large ribosomal subunit.

It is found in the cytoplasm. The protein localises to the cytosol. Its subcellular location is the rough endoplasmic reticulum. Component of the large ribosomal subunit. The ribosome is a large ribonucleoprotein complex responsible for the synthesis of proteins in the cell. This is Large ribosomal subunit protein eL18 (rpl18) from Salmo salar (Atlantic salmon).